A 220-amino-acid chain; its full sequence is Phosphoribosylformylglycinamidine synthase subunit PurQ (220 aa).

The Glutamine amidotransferase type-1 domain occupies 2 to 220; sequence RVGVVVFPGS…LRSVLAGAKV (219 aa). Catalysis depends on C85, which acts as the Nucleophile. Residues H193 and E195 contribute to the active site.

As to quaternary structure, part of the FGAM synthase complex composed of 1 PurL, 1 PurQ and 2 PurS subunits.

The protein resides in the cytoplasm. The catalysed reaction is N(2)-formyl-N(1)-(5-phospho-beta-D-ribosyl)glycinamide + L-glutamine + ATP + H2O = 2-formamido-N(1)-(5-O-phospho-beta-D-ribosyl)acetamidine + L-glutamate + ADP + phosphate + H(+). It carries out the reaction L-glutamine + H2O = L-glutamate + NH4(+). It participates in purine metabolism; IMP biosynthesis via de novo pathway; 5-amino-1-(5-phospho-D-ribosyl)imidazole from N(2)-formyl-N(1)-(5-phospho-D-ribosyl)glycinamide: step 1/2. Part of the phosphoribosylformylglycinamidine synthase complex involved in the purines biosynthetic pathway. Catalyzes the ATP-dependent conversion of formylglycinamide ribonucleotide (FGAR) and glutamine to yield formylglycinamidine ribonucleotide (FGAM) and glutamate. The FGAM synthase complex is composed of three subunits. PurQ produces an ammonia molecule by converting glutamine to glutamate. PurL transfers the ammonia molecule to FGAR to form FGAM in an ATP-dependent manner. PurS interacts with PurQ and PurL and is thought to assist in the transfer of the ammonia molecule from PurQ to PurL. This chain is Phosphoribosylformylglycinamidine synthase subunit PurQ, found in Rubrobacter xylanophilus (strain DSM 9941 / JCM 11954 / NBRC 16129 / PRD-1).